Consider the following 374-residue polypeptide: Chaperone protein DnaJ (374 aa).

A J domain is found at 6-71 (DYYAVLEVTR…QKRAAYDRFG (66 aa)). The segment at 130 to 209 (GVKKPITVPT…CHGAGTVERE (80 aa)) adopts a CR-type zinc-finger fold. Zn(2+) contacts are provided by Cys-143, Cys-146, Cys-161, Cys-164, Cys-183, Cys-186, Cys-197, and Cys-200. CXXCXGXG motif repeat units lie at residues 143–150 (CESCEGTG), 161–168 (CPTCHGAG), 183–190 (CPTCHGAG), and 197–204 (CAACHGAG).

It belongs to the DnaJ family. In terms of assembly, homodimer. The cofactor is Zn(2+).

The protein resides in the cytoplasm. In terms of biological role, participates actively in the response to hyperosmotic and heat shock by preventing the aggregation of stress-denatured proteins and by disaggregating proteins, also in an autonomous, DnaK-independent fashion. Unfolded proteins bind initially to DnaJ; upon interaction with the DnaJ-bound protein, DnaK hydrolyzes its bound ATP, resulting in the formation of a stable complex. GrpE releases ADP from DnaK; ATP binding to DnaK triggers the release of the substrate protein, thus completing the reaction cycle. Several rounds of ATP-dependent interactions between DnaJ, DnaK and GrpE are required for fully efficient folding. Also involved, together with DnaK and GrpE, in the DNA replication of plasmids through activation of initiation proteins. The protein is Chaperone protein DnaJ of Gluconacetobacter diazotrophicus (strain ATCC 49037 / DSM 5601 / CCUG 37298 / CIP 103539 / LMG 7603 / PAl5).